A 73-amino-acid chain; its full sequence is Small ribosomal subunit protein eS27 (73 aa).

Residues Cys-28, Cys-31, Cys-47, and Cys-50 each contribute to the Zn(2+) site. A C4-type zinc finger spans residues 28 to 50 (CVDCGNEQIIFGNASTEVKCHIC).

It belongs to the eukaryotic ribosomal protein eS27 family. As to quaternary structure, part of the 30S ribosomal subunit. Zn(2+) serves as cofactor.

This chain is Small ribosomal subunit protein eS27, found in Methanopyrus kandleri (strain AV19 / DSM 6324 / JCM 9639 / NBRC 100938).